We begin with the raw amino-acid sequence, 276 residues long: Tryptophan synthase alpha chain (276 aa).

Active-site proton acceptor residues include Glu49 and Asp60.

Belongs to the TrpA family. In terms of assembly, tetramer of two alpha and two beta chains.

It carries out the reaction (1S,2R)-1-C-(indol-3-yl)glycerol 3-phosphate + L-serine = D-glyceraldehyde 3-phosphate + L-tryptophan + H2O. It functions in the pathway amino-acid biosynthesis; L-tryptophan biosynthesis; L-tryptophan from chorismate: step 5/5. Its function is as follows. The alpha subunit is responsible for the aldol cleavage of indoleglycerol phosphate to indole and glyceraldehyde 3-phosphate. The protein is Tryptophan synthase alpha chain of Acidiphilium cryptum (strain JF-5).